A 242-amino-acid polypeptide reads, in one-letter code: UPF0073 membrane protein Rv1085c (242 aa).

A run of 7 helical transmembrane segments spans residues 42-62 (VYSA…SWAV), 67-87 (AGLT…VSAT), 108-128 (SMIF…ALPA), 133-153 (VVLS…MCWP), 159-179 (VGVP…ATIL), 186-206 (ALVL…LYAV), and 222-242 (FHAC…FVVF).

This sequence belongs to the UPF0073 (Hly-III) family.

It is found in the cell membrane. This Mycobacterium tuberculosis (strain ATCC 25618 / H37Rv) protein is UPF0073 membrane protein Rv1085c.